The chain runs to 290 residues: Bifunctional protein FolD (290 aa).

Residues 165–167 (GRG), serine 194, and isoleucine 235 contribute to the NADP(+) site.

The protein belongs to the tetrahydrofolate dehydrogenase/cyclohydrolase family. Homodimer.

It catalyses the reaction (6R)-5,10-methylene-5,6,7,8-tetrahydrofolate + NADP(+) = (6R)-5,10-methenyltetrahydrofolate + NADPH. The enzyme catalyses (6R)-5,10-methenyltetrahydrofolate + H2O = (6R)-10-formyltetrahydrofolate + H(+). It participates in one-carbon metabolism; tetrahydrofolate interconversion. Catalyzes the oxidation of 5,10-methylenetetrahydrofolate to 5,10-methenyltetrahydrofolate and then the hydrolysis of 5,10-methenyltetrahydrofolate to 10-formyltetrahydrofolate. The polypeptide is Bifunctional protein FolD (Syntrophotalea carbinolica (strain DSM 2380 / NBRC 103641 / GraBd1) (Pelobacter carbinolicus)).